Reading from the N-terminus, the 493-residue chain is Kelch-like protein 42 (493 aa).

The 73-residue stretch at 5–77 (EMVQIRLEDR…INAGGAREGW (73 aa)) folds into the BTB domain. 6 Kelch repeats span residues 183-241 (VLVA…ILDN), 242-289 (YLFI…AVNS), 291-332 (LYAI…ECKG), 334-379 (IYVI…SVEE), 381-436 (IYIV…ALHN), and 438-487 (GIYI…SLYL).

Component of the BCR(KLHL42) E3 ubiquitin ligase complex, at least composed of CUL3 and KLHL42. Interacts (via the BTB domain) with CUL3. Interacts (via the kelch domains) with KATNA1.

The protein localises to the cytoplasm. Its subcellular location is the cytoskeleton. The protein resides in the spindle. It functions in the pathway protein modification; protein ubiquitination. Its function is as follows. Substrate-specific adapter of a BCR (BTB-CUL3-RBX1) E3 ubiquitin-protein ligase complex required for mitotic progression and cytokinesis. The BCR(KLHL42) E3 ubiquitin ligase complex mediates the ubiquitination and subsequent degradation of KATNA1. Involved in microtubule dynamics throughout mitosis. The sequence is that of Kelch-like protein 42 (Klhl42) from Mus musculus (Mouse).